A 132-amino-acid polypeptide reads, in one-letter code: MVDQLQGTWKSVSCENFENYMKELGAGRAIRKLGCLARPVVTISTDGDRITIKTKSIFKNKEISFKLGEEFEEITPGGRKSKSTVVLDNDSLVQVQDWDGKEATIRRRLVDGKMVVESAVNNVTCTRTYQRV.

Residues arginine 107 and 127 to 129 (RTY) contribute to the a fatty acid site.

The protein belongs to the calycin superfamily. Fatty-acid binding protein (FABP) family. As to expression, highly expressed in adult retina and testis with lower levels in cerebral cortex, kidney and epididymis. In the retina, strongly expressed in the ganglion cell layer and throughout the inner nuclear layer in amacrine and bipolar cells. Not expressed in the outer nuclear layer. In the testis, detected in the seminiferous tubules.

In terms of biological role, may play a role in lipid transport. The sequence is that of Fatty acid-binding protein 12 from Rattus norvegicus (Rat).